Here is a 293-residue protein sequence, read N- to C-terminus: Acetylglutamate kinase (293 aa).

Residues 68–69 (GG), Arg-90, and Asn-189 each bind substrate.

The protein belongs to the acetylglutamate kinase family. ArgB subfamily.

Its subcellular location is the cytoplasm. The catalysed reaction is N-acetyl-L-glutamate + ATP = N-acetyl-L-glutamyl 5-phosphate + ADP. Its pathway is amino-acid biosynthesis; L-arginine biosynthesis; N(2)-acetyl-L-ornithine from L-glutamate: step 2/4. In terms of biological role, catalyzes the ATP-dependent phosphorylation of N-acetyl-L-glutamate. The polypeptide is Acetylglutamate kinase (Caldicellulosiruptor saccharolyticus (strain ATCC 43494 / DSM 8903 / Tp8T 6331)).